Here is a 933-residue protein sequence, read N- to C-terminus: Exosome complex exonuclease RRP44 homolog A (933 aa).

Residues 50–163 (KIIVVDTNVV…LVTNDRENKR (114 aa)) enclose the PINc domain. Positions 217-321 (QEHKPMSEIT…NVDDAPRTSN (105 aa)) constitute a CSD1 domain. The disordered stretch occupies residues 296–336 (AEEDDEEDDTVHLAPDNVDDAPRTSNLSHETSGDKNAAPVR). The CSD2 domain occupies 371–438 (ALFVSKDRRI…ETEVVLIEND (68 aa)). The RNB domain occupies 469-798 (RQDLRHLLVF…FVHRLLAASL (330 aa)). Residues D481 and D490 each coordinate Mg(2+).

The protein belongs to the RNR ribonuclease family. In terms of assembly, probable component of the RNA exosome complex. Mg(2+) is required as a cofactor.

It is found in the nucleus. In terms of biological role, catalytic component of the RNA exosome complex which has 3'-&gt;5' exoribonuclease activity and participates in a multitude of cellular RNA processing and degradation events. Required for 5.8S rRNA intermediate processing and the degradation of 5' external transcribed spacer (5' ETS), a maturation by-product of rRNA synthesis. Is not involved in the degradation of turnip crinkle virus (TCV) RNA and significant virus resistance. Required for normal development of female gametophytes and early embryogenesis. The polypeptide is Exosome complex exonuclease RRP44 homolog A (Arabidopsis thaliana (Mouse-ear cress)).